Consider the following 679-residue polypeptide: Glycine--tRNA ligase beta subunit (679 aa).

It belongs to the class-II aminoacyl-tRNA synthetase family. As to quaternary structure, tetramer of two alpha and two beta subunits.

It is found in the cytoplasm. The enzyme catalyses tRNA(Gly) + glycine + ATP = glycyl-tRNA(Gly) + AMP + diphosphate. This chain is Glycine--tRNA ligase beta subunit, found in Streptococcus mutans serotype c (strain ATCC 700610 / UA159).